Here is a 298-residue protein sequence, read N- to C-terminus: Nucleoid occlusion protein (298 aa).

The H-T-H motif DNA-binding region spans 152–171; it reads EALAQRLGKGQSTVANKLRL.

Belongs to the ParB family.

The protein localises to the cytoplasm. It localises to the nucleoid. Effects nucleoid occlusion by binding relatively nonspecifically to DNA and preventing the assembly of the division machinery in the vicinity of the nucleoid, especially under conditions that disturb the cell cycle. It helps to coordinate cell division and chromosome segregation by preventing the formation of the Z ring through the nucleoid, which would cause chromosome breakage. In Lysinibacillus sphaericus (strain C3-41), this protein is Nucleoid occlusion protein.